The chain runs to 310 residues: Repression factor of MSEs protein 1 (310 aa).

2 disordered regions span residues 83–155 (TQEV…EANA) and 192–230 (DGIRRRSSRISERDKRRSQSRLGSEEDEEGDGHDGDEGE). Over residues 92–106 (RNTSSSSSSTRSNSS) the composition is skewed to low complexity. The segment covering 107 to 120 (ADISDTEYSGENTP) has biased composition (polar residues). The span at 127-136 (SRRRRTRSRA) shows a compositional bias: basic residues. The segment covering 139–155 (RENSLPASLPSISEANA) has biased composition (polar residues). Over residues 192–208 (DGIRRRSSRISERDKRR) the composition is skewed to basic and acidic residues. Position 215 is a phosphoserine (Ser215).

In terms of assembly, interacts directly with HST1 and SUM1. Required for the interaction between HST1 and SUM1.

It localises to the nucleus. Tethering factor required for histone deacetylase HST1-mediated repression. Probably involved in targeting HST1 to a subset of SUM1-regulated genes. This Saccharomyces cerevisiae (strain ATCC 204508 / S288c) (Baker's yeast) protein is Repression factor of MSEs protein 1 (RFM1).